A 232-amino-acid polypeptide reads, in one-letter code: tRNA (guanine-N(1)-)-methyltransferase (232 aa).

Gly-116 provides a ligand contact to S-adenosyl-L-methionine.

Belongs to the RNA methyltransferase TrmD family. Homodimer.

The protein localises to the cytoplasm. The catalysed reaction is guanosine(37) in tRNA + S-adenosyl-L-methionine = N(1)-methylguanosine(37) in tRNA + S-adenosyl-L-homocysteine + H(+). In terms of biological role, specifically methylates guanosine-37 in various tRNAs. The protein is tRNA (guanine-N(1)-)-methyltransferase of Chlorobium luteolum (strain DSM 273 / BCRC 81028 / 2530) (Pelodictyon luteolum).